The sequence spans 257 residues: K88 minor fimbrial subunit FaeJ (257 aa).

The N-terminal stretch at Met1–Ala26 is a signal peptide.

The protein resides in the fimbrium. Its function is as follows. K88 minor fimbrial subunit, plays an essential role in the biogenesis of the K88 fimbriae. Fimbriae (also called pili), are polar filaments radiating from the surface of the bacterium to a length of 0.5-1.5 micrometers and numbering 100-300 per cell. They enable bacteria to colonize the epithelium of specific host organs. The chain is K88 minor fimbrial subunit FaeJ (faeJ) from Escherichia coli.